A 186-amino-acid polypeptide reads, in one-letter code: Cytochrome c oxidase polypeptide 5, mitochondrial (186 aa).

The N-terminal 20 residues, 1 to 20 (MYLSKIICKKVPMKLLCTRN), are a transit peptide targeting the mitochondrion. Residues 21–107 (AATVSAAATN…GPRAFSHISQ (87 aa)) are Mitochondrial matrix-facing. Residues 108 to 128 (KTVFWGTVAGLTIGVVLFGLI) form a helical membrane-spanning segment. Over 129 to 186 (RTQAAPSPRTMTREWQEKSNEYMKENKINPISGEASEGFKGRGQISGGIFSPSEKDKK) the chain is Mitochondrial intermembrane. Positions 149-186 (EYMKENKINPISGEASEGFKGRGQISGGIFSPSEKDKK) are disordered.

It belongs to the cytochrome c oxidase IV family. Component of the cytochrome c oxidase (complex IV, CIV), a multisubunit enzyme composed of a catalytic core of 3 subunits and seevral supernumerary subunits. The complex exists as a monomer or a dimer and forms supercomplexes (SCs) in the inner mitochondrial membrane with ubiquinol-cytochrome c oxidoreductase (cytochrome b-c1 complex, complex III, CIII).

It localises to the mitochondrion inner membrane. It functions in the pathway energy metabolism; oxidative phosphorylation. Its function is as follows. Component of the cytochrome c oxidase, the last enzyme in the mitochondrial electron transport chain which drives oxidative phosphorylation. The respiratory chain contains 3 multisubunit complexes succinate dehydrogenase (complex II, CII), ubiquinol-cytochrome c oxidoreductase (cytochrome b-c1 complex, complex III, CIII) and cytochrome c oxidase (complex IV, CIV), that cooperate to transfer electrons derived from NADH and succinate to molecular oxygen, creating an electrochemical gradient over the inner membrane that drives transmembrane transport and the ATP synthase. Cytochrome c oxidase is the component of the respiratory chain that catalyzes the reduction of oxygen to water. Electrons originating from reduced cytochrome c in the intermembrane space (IMS) are transferred via the dinuclear copper A center (CU(A)) of subunit 2 and heme A of subunit 1 to the active site in subunit 1, a binuclear center (BNC) formed by heme A3 and copper B (CU(B)). The BNC reduces molecular oxygen to 2 water molecules using 4 electrons from cytochrome c in the IMS and 4 protons from the mitochondrial matrix. The sequence is that of Cytochrome c oxidase polypeptide 5, mitochondrial (cox5) from Schizosaccharomyces pombe (strain 972 / ATCC 24843) (Fission yeast).